Here is a 160-residue protein sequence, read N- to C-terminus: Cytochrome b6-f complex subunit 4 (160 aa).

The next 3 membrane-spanning stretches (helical) occupy residues 36–56, 95–115, and 131–151; these read LLYVFPVVIFGTIGLCTGLAI, LLGIACMAGVPLGLMLVPFIE, and AIFLFGTVVTIWLGIGATFPI.

It belongs to the cytochrome b family. PetD subfamily. In terms of assembly, the 4 large subunits of the cytochrome b6-f complex are cytochrome b6, subunit IV (17 kDa polypeptide, PetD), cytochrome f and the Rieske protein, while the 4 small subunits are PetG, PetL, PetM and PetN. The complex functions as a dimer.

Its subcellular location is the cellular thylakoid membrane. Its function is as follows. Component of the cytochrome b6-f complex, which mediates electron transfer between photosystem II (PSII) and photosystem I (PSI), cyclic electron flow around PSI, and state transitions. The sequence is that of Cytochrome b6-f complex subunit 4 from Microcystis aeruginosa (strain NIES-843 / IAM M-2473).